We begin with the raw amino-acid sequence, 164 residues long: UPF0304 protein PM1500 (164 aa).

It belongs to the UPF0304 family.

The sequence is that of UPF0304 protein PM1500 from Pasteurella multocida (strain Pm70).